The primary structure comprises 318 residues: Porphobilinogen deaminase (318 aa).

The residue at position 241 (cysteine 241) is an S-(dipyrrolylmethanemethyl)cysteine.

It belongs to the HMBS family. In terms of assembly, monomer. Dipyrromethane is required as a cofactor.

The enzyme catalyses 4 porphobilinogen + H2O = hydroxymethylbilane + 4 NH4(+). It participates in porphyrin-containing compound metabolism; protoporphyrin-IX biosynthesis; coproporphyrinogen-III from 5-aminolevulinate: step 2/4. Its function is as follows. Tetrapolymerization of the monopyrrole PBG into the hydroxymethylbilane pre-uroporphyrinogen in several discrete steps. The polypeptide is Porphobilinogen deaminase (Geobacter sp. (strain M21)).